A 79-amino-acid chain; its full sequence is Cell division protein ZapB (79 aa).

Residues 3–79 (LEVFEKLEAK…QALLGRMEEV (77 aa)) are a coiled coil.

This sequence belongs to the ZapB family. As to quaternary structure, homodimer. The ends of the coiled-coil dimer bind to each other, forming polymers. Interacts with FtsZ.

The protein localises to the cytoplasm. Functionally, non-essential, abundant cell division factor that is required for proper Z-ring formation. It is recruited early to the divisome by direct interaction with FtsZ, stimulating Z-ring assembly and thereby promoting cell division earlier in the cell cycle. Its recruitment to the Z-ring requires functional FtsA or ZipA. The sequence is that of Cell division protein ZapB from Salmonella typhi.